A 146-amino-acid chain; its full sequence is Hemoglobin subunit delta (146 aa).

The region spanning 2–146 is the Globin domain; sequence HLTGEEKSAV…VATALAHKYH (145 aa). Residues His-63 and His-92 each coordinate heme b.

This sequence belongs to the globin family. As to quaternary structure, heterotetramer of two delta chains and two alpha chains. As to expression, red blood cells.

The chain is Hemoglobin subunit delta (HBD) from Ateles fusciceps (Brown-headed spider monkey).